We begin with the raw amino-acid sequence, 493 residues long: Glutamate--tRNA ligase (493 aa).

The short motif at 10-20 (PSPTGDPHVGT) is the 'HIGH' region element. The 'KMSKS' region signature appears at 251-255 (KLSKR). An ATP-binding site is contributed by K254.

It belongs to the class-I aminoacyl-tRNA synthetase family. Glutamate--tRNA ligase type 1 subfamily. Monomer.

It localises to the cytoplasm. The enzyme catalyses tRNA(Glu) + L-glutamate + ATP = L-glutamyl-tRNA(Glu) + AMP + diphosphate. Its function is as follows. Catalyzes the attachment of glutamate to tRNA(Glu) in a two-step reaction: glutamate is first activated by ATP to form Glu-AMP and then transferred to the acceptor end of tRNA(Glu). In Pseudomonas putida (strain ATCC 47054 / DSM 6125 / CFBP 8728 / NCIMB 11950 / KT2440), this protein is Glutamate--tRNA ligase.